We begin with the raw amino-acid sequence, 185 residues long: Disulfide bond formation protein B (185 aa).

At 1–25 (MLLFFVILGIFVLTILKAISKQRWS) the chain is on the cytoplasmic side. Residues 26 to 42 (WLLLAASALSLELSALY) form a helical membrane-spanning segment. At 43 to 60 (FQHVMQLEPCVMCVYERL) the chain is on the periplasmic side. Residues Cys52 and Cys55 are joined by a disulfide bond. The helical transmembrane segment at 61 to 76 (AMLGILLAGLIGASSP) threads the bilayer. Residues 77–83 (NNVFIRL) are Cytoplasmic-facing. Residues 84 to 101 (SAFLLWGISAVWGILLAI) traverse the membrane as a helical segment. At 102 to 156 (KHTDYQLHPSPFFTCDFFPNFPAWAPLHEWLPWLFNPTGDCSDIVWQFLGYSMPQ) the chain is on the periplasmic side. Residues Cys116 and Cys142 are joined by a disulfide bond. Residues 157 to 175 (WLIVSFSLYTLLFIIFAIS) traverse the membrane as a helical segment. Topologically, residues 176–185 (AVLKTKKQLF) are cytoplasmic.

The protein belongs to the DsbB family.

The protein localises to the cell inner membrane. Functionally, required for disulfide bond formation in some periplasmic proteins. Acts by oxidizing the DsbA protein. The polypeptide is Disulfide bond formation protein B (Psychromonas ingrahamii (strain DSM 17664 / CCUG 51855 / 37)).